The primary structure comprises 486 residues: UDP-N-acetylmuramate--L-alanine ligase (486 aa).

129-135 (GTHGKTT) is a binding site for ATP.

Belongs to the MurCDEF family.

The protein resides in the cytoplasm. It catalyses the reaction UDP-N-acetyl-alpha-D-muramate + L-alanine + ATP = UDP-N-acetyl-alpha-D-muramoyl-L-alanine + ADP + phosphate + H(+). The protein operates within cell wall biogenesis; peptidoglycan biosynthesis. Its function is as follows. Cell wall formation. The sequence is that of UDP-N-acetylmuramate--L-alanine ligase from Vibrio vulnificus (strain YJ016).